Consider the following 430-residue polypeptide: Adenylosuccinate synthetase (430 aa).

Residues 17-23 (GDEGKGK) and 45-47 (GHT) contribute to the GTP site. Asp-18 (proton acceptor) is an active-site residue. The Mg(2+) site is built by Asp-18 and Gly-45. Residues 18–21 (DEGK), 43–46 (NAGH), Thr-139, Arg-153, Asn-229, Thr-244, and Arg-308 each bind IMP. His-46 functions as the Proton donor in the catalytic mechanism. 304-310 (TVTGRRR) contributes to the substrate binding site. GTP contacts are provided by residues Arg-310, 336–338 (KLD), and 418–420 (GVG).

It belongs to the adenylosuccinate synthetase family. Homodimer. Requires Mg(2+) as cofactor.

The protein localises to the cytoplasm. The catalysed reaction is IMP + L-aspartate + GTP = N(6)-(1,2-dicarboxyethyl)-AMP + GDP + phosphate + 2 H(+). The protein operates within purine metabolism; AMP biosynthesis via de novo pathway; AMP from IMP: step 1/2. Its function is as follows. Plays an important role in the de novo pathway and in the salvage pathway of purine nucleotide biosynthesis. Catalyzes the first committed step in the biosynthesis of AMP from IMP. In Cryptococcus neoformans var. neoformans serotype D (strain JEC21 / ATCC MYA-565) (Filobasidiella neoformans), this protein is Adenylosuccinate synthetase.